Here is a 296-residue protein sequence, read N- to C-terminus: MLTFQQIILKLQDYWDQQGCALLQPIDLEVGAGTSHTATFLRAIGPEPWKAAYVQPSRRPKDGRYGENPNRLQHYYQYQVVLKPAPENILDLYLGSLAALGLDLKENDVRFVEDGWENPTLGAWGLGWEVWLNGMEVTQFTYFQQVGGLDCKPVLGEITYGIERLAMYIQNCSNVYDLVWADGISYGDVYHQNEVEQSCYNFEHSNTDLLFANFTNYESEAKRLMEVPLALPAYEMVLKAAYTFNLLDARGAISVTERAAYIGRIRNLSRAVAQAYFESREKLGFPMCQRPARAKA.

The protein belongs to the class-II aminoacyl-tRNA synthetase family. As to quaternary structure, tetramer of two alpha and two beta subunits.

Its subcellular location is the cytoplasm. The catalysed reaction is tRNA(Gly) + glycine + ATP = glycyl-tRNA(Gly) + AMP + diphosphate. The polypeptide is Glycine--tRNA ligase alpha subunit (Polynucleobacter necessarius subsp. necessarius (strain STIR1)).